The chain runs to 715 residues: ATP-dependent DNA helicase Hel308 (715 aa).

Residues 8–36 carry the Q motif motif; the sequence is MPIEDLKLPSNVIEIIKKRGIKKLNPPQT. Residues Gln35 and 53-60 contribute to the ATP site; that span reads SPTGSGKT. Residues 40–203 form the Helicase ATP-binding domain; sequence KKGLLEGNRL…WLGAEPVATN (164 aa). The DEAH box motif lies at 152 to 155; sequence DELH. One can recognise a Helicase C-terminal domain in the interval 236 to 442; the sequence is HGDDAIIAYT…ERAFYTFLLG (207 aa).

This sequence belongs to the helicase family. Hel308 subfamily. In terms of assembly, monomer.

It catalyses the reaction Couples ATP hydrolysis with the unwinding of duplex DNA by translocating in the 3'-5' direction.. The catalysed reaction is ATP + H2O = ADP + phosphate + H(+). Its function is as follows. DNA-dependent ATPase and 3'-5' DNA helicase that may be involved in repair of stalled replication forks. A low processivity 3'-5' helicase. Unwinds short dsDNA substrates with 3'-overhangs (25 bp dsDNA with 25 base overhang), less active on longer dsDNA substrates. Also unwinds the lagging strand of a stalled replication fork (but the leading strand was not tested). Binds ssDNA, but dsDNA about 35-fold less well. Able to displace streptavidin from biotinylated ssDNA, which is partially inhibited by DNA-binding proteins, suggesting it may play a role in stripping proteins from stalled replication forks. In Saccharolobus solfataricus (strain 98/2) (Sulfolobus solfataricus), this protein is ATP-dependent DNA helicase Hel308.